The primary structure comprises 544 residues: Chaperonin GroEL 1 (544 aa).

Residues 29–32, K50, 86–90, G414, and D494 each bind ATP; these read TLGP and DGTTT.

Belongs to the chaperonin (HSP60) family. In terms of assembly, forms a cylinder of 14 subunits composed of two heptameric rings stacked back-to-back. Interacts with the co-chaperonin GroES.

It localises to the cytoplasm. It carries out the reaction ATP + H2O + a folded polypeptide = ADP + phosphate + an unfolded polypeptide.. Functionally, together with its co-chaperonin GroES, plays an essential role in assisting protein folding. The GroEL-GroES system forms a nano-cage that allows encapsulation of the non-native substrate proteins and provides a physical environment optimized to promote and accelerate protein folding. The sequence is that of Chaperonin GroEL 1 from Psychromonas ingrahamii (strain DSM 17664 / CCUG 51855 / 37).